Reading from the N-terminus, the 376-residue chain is MASFVDEVLIRVSSGRGGNGCVAFRREKYVPRGGPAGGDGGRGGDVVFQVRRNMRTLVHLRYGRVFRAKNGQDGEGARRFGAKGHDCVIPLPPGCLLRDAQTHEVLHDFGHAHEGCVTLLSGGRGGWGNYHFRGPVQQAPQRAHSGQPGQERVVHVELRIVADVGFVGLPNAGKSSLLNFFTHARSRVAPYPFTTRIPYLGVLRTGDGRDVILADVPGILERASQGVGLGLRFLKHLTRCAGLAFLIDLADERALHTYDLLCKELYAFSPVFETKARVLVGTKLDLPNARECLQQLRAQHPSTEVCGVSVHNRWGLDELQEAFVRLSDAGAGALRSPVWRNQAPSFMYAQLEDPVCQVRDDFGATVSLSRKRKVRG.

The Obg domain occupies 2-161 (ASFVDEVLIR…RVVHVELRIV (160 aa)). The region spanning 162–328 (ADVGFVGLPN…LQEAFVRLSD (167 aa)) is the OBG-type G domain. GTP is bound by residues 168–175 (GLPNAGKS), 193–197 (FTTRI), 215–218 (DVPG), 282–285 (TKLD), and 309–311 (SVH). Mg(2+)-binding residues include S175 and T195.

Belongs to the TRAFAC class OBG-HflX-like GTPase superfamily. OBG GTPase family. As to quaternary structure, monomer. The cofactor is Mg(2+).

It localises to the cytoplasm. An essential GTPase which binds GTP, GDP and possibly (p)ppGpp with moderate affinity, with high nucleotide exchange rates and a fairly low GTP hydrolysis rate. Plays a role in control of the cell cycle, stress response, ribosome biogenesis and in those bacteria that undergo differentiation, in morphogenesis control. The polypeptide is GTPase Obg (Treponema pallidum (strain Nichols)).